The primary structure comprises 530 residues: Berberine bridge enzyme-like 4 (530 aa).

The signal sequence occupies residues 1–19 (MKGTLSVLCLVLLVSVLEA). Cysteine 32 and cysteine 95 are joined by a disulfide. A glycan (N-linked (GlcNAc...) asparagine) is linked at asparagine 52. The region spanning 73–247 (NYRKLLAIVA…LSWKINLVDV (175 aa)) is the FAD-binding PCMH-type domain. The segment at residues 110–172 (HDYEGLSYMS…QTLAFPAGVC (63 aa)) is a cross-link (6-(S-cysteinyl)-8alpha-(pros-histidyl)-FAD (His-Cys)). 4 N-linked (GlcNAc...) asparagine glycosylation sites follow: asparagine 257, asparagine 292, asparagine 341, and asparagine 441.

It belongs to the oxygen-dependent FAD-linked oxidoreductase family. FAD is required as a cofactor. In terms of processing, the FAD cofactor is bound via a bicovalent 6-S-cysteinyl, 8alpha-N1-histidyl FAD linkage.

Its subcellular location is the secreted. The protein localises to the cell wall. Probable flavin-dependent oxidoreductase. In Arabidopsis thaliana (Mouse-ear cress), this protein is Berberine bridge enzyme-like 4.